Consider the following 533-residue polypeptide: Thromboxane-A synthase (533 aa).

At 1 to 10 (MEALGFLKLE) the chain is on the cytoplasmic side. A helical membrane pass occupies residues 11–31 (VNGPMVTVALSVALLALLKWY). At 32 to 75 (STSAFSRLEKLGLRHPKPSPFIGNLMFFRQGFWESQMELRKLYG) the chain is on the lumenal side. A helical membrane pass occupies residues 76–96 (PLCGYYLGRRMFIVISEPDMI). Over 97 to 223 (KQVLVENFSN…KRFFEFCIPR (127 aa)) the chain is Cytoplasmic. The helical transmembrane segment at 224-244 (PILVLLLSFPSIMVPLARILP) threads the bilayer. Topologically, residues 245–335 (NKNRDELNGF…LTVDEIVGQA (91 aa)) are lumenal. Residues 336–356 (FIFLIAGYEIVTNTLSFATYL) traverse the membrane as a helical segment. The Cytoplasmic portion of the chain corresponds to 357–533 (LATNPDCQEK…NGVYIKIVSR (177 aa)). Position 479 (Cys-479) interacts with heme.

This sequence belongs to the cytochrome P450 family. As to quaternary structure, monomer. Heme serves as cofactor.

Its subcellular location is the endoplasmic reticulum membrane. It catalyses the reaction prostaglandin H2 = thromboxane A2. The enzyme catalyses prostaglandin H2 = (12S)-hydroxy-(5Z,8E,10E)-heptadecatrienoate + malonaldehyde. The catalysed reaction is a hydroperoxyeicosatetraenoate = an oxoeicosatetraenoate + H2O. It carries out the reaction (15S)-hydroperoxy-(5Z,8Z,11Z,13E)-eicosatetraenoate = 15-oxo-(5Z,8Z,11Z,13E)-eicosatetraenoate + H2O. It catalyses the reaction (15S)-hydroperoxy-(5Z,8Z,11Z,13E)-eicosatetraenoate + AH2 = (15S)-hydroxy-(5Z,8Z,11Z,13E)-eicosatetraenoate + A + H2O. In terms of biological role, catalyzes the conversion of prostaglandin H2 (PGH2) to thromboxane A2 (TXA2), a potent inducer of blood vessel constriction and platelet aggregation. Also cleaves PGH2 to 12-hydroxy-heptadecatrienoicacid (12-HHT) and malondialdehyde, which is known to act as a mediator of DNA damage. 12-HHT and malondialdehyde are formed stoichiometrically in the same amounts as TXA2. Additionally, displays dehydratase activity, toward (15S)-hydroperoxy-(5Z,8Z,11Z,13E)-eicosatetraenoate (15(S)-HPETE) producing 15-KETE and 15-HETE. The protein is Thromboxane-A synthase (TBXAS1) of Macaca fascicularis (Crab-eating macaque).